Reading from the N-terminus, the 212-residue chain is Hydroxyacylglutathione hydrolase GloC (212 aa).

Zn(2+) contacts are provided by histidine 55, histidine 57, aspartate 59, histidine 60, histidine 132, aspartate 151, and histidine 192.

It belongs to the metallo-beta-lactamase superfamily. Glyoxalase II family. Zn(2+) serves as cofactor.

It carries out the reaction an S-(2-hydroxyacyl)glutathione + H2O = a 2-hydroxy carboxylate + glutathione + H(+). It catalyses the reaction (R)-S-lactoylglutathione + H2O = (R)-lactate + glutathione + H(+). It participates in secondary metabolite metabolism; methylglyoxal degradation; (R)-lactate from methylglyoxal: step 2/2. Type II glyoxalase, isozyme of GloB, that hydrolyzes (R)-S-lactoylglutathione to (R)-lactate and glutathione. Plays a role in methylglyoxal (MG) detoxification. The protein is Hydroxyacylglutathione hydrolase GloC of Haemophilus influenzae (strain ATCC 51907 / DSM 11121 / KW20 / Rd).